Reading from the N-terminus, the 154-residue chain is Low molecular weight protein-tyrosine-phosphatase PtpA (154 aa).

Cysteine 8 (nucleophile) is an active-site residue. Arginine 14 is a catalytic residue. Aspartate 120 acts as the Proton donor in catalysis.

Belongs to the low molecular weight phosphotyrosine protein phosphatase family.

The catalysed reaction is O-phospho-L-tyrosyl-[protein] + H2O = L-tyrosyl-[protein] + phosphate. Its function is as follows. Dephosphorylates the phosphotyrosine-containing proteins. The sequence is that of Low molecular weight protein-tyrosine-phosphatase PtpA (ptpA) from Staphylococcus epidermidis (strain ATCC 35984 / DSM 28319 / BCRC 17069 / CCUG 31568 / BM 3577 / RP62A).